The chain runs to 520 residues: Aspartate-proton symporter (520 aa).

14 helical membrane-spanning segments follow: residues 13 to 33, 49 to 69, 85 to 105, 130 to 150, 161 to 181, 201 to 221, 232 to 252, 281 to 301, 345 to 365, 366 to 386, 402 to 422, 425 to 445, 460 to 480, and 482 to 502; these read LFDL…LFAV, ILGG…GAAL, HLVG…LISI, TISG…LNYW, IISI…IFHF, AAIS…IVSV, IPIA…VLQV, IAVM…AILS, WLSF…NALV, NVCS…SAAL, MSII…WSGW, VSWL…FSKY, AWWL…GSFG, and GLGI…SLAI.

It belongs to the amino acid-polyamine-organocation (APC) superfamily. AGT (TC 2.A.3.11) family.

Its subcellular location is the cell membrane. Its function is as follows. Uptake of L-aspartate with the concomitant import of a proton. Can also transport aspartate hydroxamate and L-glutamate with lower affinity and efficiency. The protein is Aspartate-proton symporter (yveA) of Bacillus subtilis (strain 168).